The sequence spans 278 residues: Putative ABC transporter ATP-binding protein MJ1572 (278 aa).

One can recognise an ABC transporter domain in the interval 5–242 (YRLVDVSYKY…LDELNLDVPE (238 aa)). 38-45 (GPNGAGKT) lines the ATP pocket.

It belongs to the ABC transporter superfamily.

The protein localises to the cell membrane. In terms of biological role, probably part of an ABC transporter complex. Responsible for energy coupling to the transport system. The protein is Putative ABC transporter ATP-binding protein MJ1572 of Methanocaldococcus jannaschii (strain ATCC 43067 / DSM 2661 / JAL-1 / JCM 10045 / NBRC 100440) (Methanococcus jannaschii).